A 60-amino-acid polypeptide reads, in one-letter code: Large ribosomal subunit protein uL29 (60 aa).

This sequence belongs to the universal ribosomal protein uL29 family.

The protein is Large ribosomal subunit protein uL29 of Fusobacterium nucleatum subsp. nucleatum (strain ATCC 25586 / DSM 15643 / BCRC 10681 / CIP 101130 / JCM 8532 / KCTC 2640 / LMG 13131 / VPI 4355).